The chain runs to 118 residues: Large ribosomal subunit protein bL20 (118 aa).

It belongs to the bacterial ribosomal protein bL20 family.

In terms of biological role, binds directly to 23S ribosomal RNA and is necessary for the in vitro assembly process of the 50S ribosomal subunit. It is not involved in the protein synthesizing functions of that subunit. This is Large ribosomal subunit protein bL20 from Francisella philomiragia subsp. philomiragia (strain ATCC 25017 / CCUG 19701 / FSC 153 / O#319-036).